Here is a 336-residue protein sequence, read N- to C-terminus: Quinolinate synthase (336 aa).

His-25 and Ser-42 together coordinate iminosuccinate. A [4Fe-4S] cluster-binding site is contributed by Cys-86. Iminosuccinate is bound by residues 117–119 (YIN) and Ser-138. Cys-198 lines the [4Fe-4S] cluster pocket. Residues 224 to 226 (HPE) and Thr-241 each bind iminosuccinate. Cys-288 contributes to the [4Fe-4S] cluster binding site.

It belongs to the quinolinate synthase family. Type 3 subfamily. Requires [4Fe-4S] cluster as cofactor.

It localises to the cytoplasm. It catalyses the reaction iminosuccinate + dihydroxyacetone phosphate = quinolinate + phosphate + 2 H2O + H(+). The protein operates within cofactor biosynthesis; NAD(+) biosynthesis; quinolinate from iminoaspartate: step 1/1. In terms of biological role, catalyzes the condensation of iminoaspartate with dihydroxyacetone phosphate to form quinolinate. The sequence is that of Quinolinate synthase from Helicobacter pylori (strain HPAG1).